Consider the following 123-residue polypeptide: uncharacterized protein (123 aa).

This is an uncharacterized protein from Schizosaccharomyces pombe (strain 972 / ATCC 24843) (Fission yeast).